Reading from the N-terminus, the 67-residue chain is Peptide Hp1036 (67 aa).

The signal sequence occupies residues Met-1 to Ala-23. Residue Phe-36 is modified to Phenylalanine amide. The propeptide occupies Gly-40–Met-67.

The protein belongs to the non-disulfide-bridged peptide (NDBP) superfamily. Short antimicrobial peptide (group 4) family. In terms of tissue distribution, expressed by the venom gland.

It localises to the secreted. The protein localises to the target cell membrane. In terms of biological role, amphipathic peptide with antibacterial activities. Shows antiviral activities against the herpes simplex virus type-1. It potently inhibits the initial infection by provoking the rupture of viral envelop and the dissociation of proteins from the virions (EC(50) is 0.43 uM). It also effectively inhibits viral attachment (EC(50) is 2.87 uM), viral entry (EC(50) is 4.29 uM) and viral proliferation after infection (EC(50) is 7.86). Morever, it enters mammalian tested cells (Vero) and reduces the intracellular infectivity. This Heterometrus petersii (Asian forest scorpion) protein is Peptide Hp1036.